The primary structure comprises 601 residues: Elongation factor 4 (601 aa).

Positions 7–189 (DTIRNFSIVA…AIVAKLPPPK (183 aa)) constitute a tr-type G domain. GTP is bound by residues 19–24 (DHGKST) and 136–139 (NKID).

Belongs to the TRAFAC class translation factor GTPase superfamily. Classic translation factor GTPase family. LepA subfamily.

The protein localises to the cell inner membrane. It carries out the reaction GTP + H2O = GDP + phosphate + H(+). In terms of biological role, required for accurate and efficient protein synthesis under certain stress conditions. May act as a fidelity factor of the translation reaction, by catalyzing a one-codon backward translocation of tRNAs on improperly translocated ribosomes. Back-translocation proceeds from a post-translocation (POST) complex to a pre-translocation (PRE) complex, thus giving elongation factor G a second chance to translocate the tRNAs correctly. Binds to ribosomes in a GTP-dependent manner. The chain is Elongation factor 4 from Methylobacterium sp. (strain 4-46).